The chain runs to 101 residues: Apolipoprotein C-II (101 aa).

A signal peptide spans 1 to 22 (MGTRFLLALCLVLLVLGFEVQG). The segment at 66–74 (AVDEKLRDL) is lipid binding. The tract at residues 78–101 (STAAMSTYTGIFTDQVLSVLKGEE) is lipoprotein lipase cofactor.

It belongs to the apolipoprotein C2 family. Post-translationally, proapolipoprotein C-II is synthesized as a sialic acid containing glycoprotein which is subsequently desialylated prior to its proteolytic processing. Proapolipoprotein C-II, the major form found in plasma undergoes proteolytic cleavage of its N-terminal hexapeptide to generate apolipoprotein C-II, which occurs as the minor form in plasma.

The protein localises to the secreted. Component of chylomicrons, very low-density lipoproteins (VLDL), low-density lipoproteins (LDL), and high-density lipoproteins (HDL) in plasma. Plays an important role in lipoprotein metabolism as an activator of lipoprotein lipase. Both proapolipoprotein C-II and apolipoprotein C-II can activate lipoprotein lipase. This Colobus guereza (Mantled guereza) protein is Apolipoprotein C-II (APOC2).